Consider the following 414-residue polypeptide: Dothistromin biosynthesis peroxidase dotB (414 aa).

A signal peptide spans 1 to 18; it reads MHFFSAIVLTCLASTAVA. Cysteine 72 contributes to the heme binding site. N-linked (GlcNAc...) asparagine glycosylation is found at asparagine 187, asparagine 241, and asparagine 328.

The protein belongs to the chloroperoxidase family. Heme b serves as cofactor.

Its pathway is mycotoxin biosynthesis. Its function is as follows. Peroxidase; part of the fragmented gene cluster that mediates the biosynthesis of dothistromin (DOTH), a polyketide toxin very similar in structure to the aflatoxin precursor, versicolorin B. The first step of the pathway is the conversion of acetate to norsolorinic acid (NOR) and requires the fatty acid synthase subunits hexA and hexB, as well as the polyketide synthase pksA. PksA combines a hexanoyl starter unit and 7 malonyl-CoA extender units to synthesize the precursor NOR. The hexanoyl starter unit is provided to the acyl-carrier protein (ACP) domain by the fungal fatty acid synthase hexA/hexB. The second step is the conversion of NOR to averantin (AVN) and requires the norsolorinic acid ketoreductase nor1, which catalyzes the dehydration of norsolorinic acid to form (1'S)-averantin. The cytochrome P450 monooxygenase avnA then catalyzes the hydroxylation of AVN to 5'hydroxyaverantin (HAVN). The next step is performed by adhA that transforms HAVN to averufin (AVF). Averufin might then be converted to hydroxyversicolorone by cypX and avfA. Hydroxyversicolorone is further converted versiconal hemiacetal acetate (VHA) by moxY. VHA is then the substrate for the versiconal hemiacetal acetate esterase est1 to yield versiconal (VAL). Versicolorin B synthase vbsA then converts VAL to versicolorin B (VERB) by closing the bisfuran ring. Then, the activity of the versicolorin B desaturase verB leads to versicolorin A (VERA). DotB, a predicted chloroperoxidase, may perform epoxidation of the A-ring of VERA. Alternatively, a cytochrome P450, such as cypX or avnA could catalyze this step. It is also possible that another, uncharacterized, cytochrome P450 enzyme is responsible for this step. Opening of the epoxide could potentially be achieved by the epoxide hydrolase epoA. However, epoA seems not to be required for DOTH biosynthesis, but other epoxide hydrolases may have the ability to complement this hydrolysis. Alternatively, opening of the epoxide ring could be achieved non-enzymatically. The next step is the deoxygenation of ring A to yield the 5,8-dihydroxyanthraquinone which is most likely catalyzed by the NADPH dehydrogenase encoded by ver1. The last stages of DOTH biosynthesis are proposed to involve hydroxylation of the bisfuran. OrdB and norB might have oxidative roles here. An alternative possibility is that cytochrome P450 monoogenases such as avnA and cypX might perform these steps in addition to previously proposed steps. The polypeptide is Dothistromin biosynthesis peroxidase dotB (Dothistroma septosporum (Red band needle blight fungus)).